We begin with the raw amino-acid sequence, 186 residues long: Probable nicotinate-nucleotide adenylyltransferase (186 aa).

It belongs to the NadD family.

It carries out the reaction nicotinate beta-D-ribonucleotide + ATP + H(+) = deamido-NAD(+) + diphosphate. It participates in cofactor biosynthesis; NAD(+) biosynthesis; deamido-NAD(+) from nicotinate D-ribonucleotide: step 1/1. In terms of biological role, catalyzes the reversible adenylation of nicotinate mononucleotide (NaMN) to nicotinic acid adenine dinucleotide (NaAD). In Thermus thermophilus (strain ATCC 27634 / DSM 579 / HB8), this protein is Probable nicotinate-nucleotide adenylyltransferase.